The primary structure comprises 254 residues: Ubiquinone/menaquinone biosynthesis C-methyltransferase UbiE (254 aa).

S-adenosyl-L-methionine contacts are provided by residues threonine 77, aspartate 98, 126–127 (NA), and serine 143.

The protein belongs to the class I-like SAM-binding methyltransferase superfamily. MenG/UbiE family.

It carries out the reaction a 2-demethylmenaquinol + S-adenosyl-L-methionine = a menaquinol + S-adenosyl-L-homocysteine + H(+). It catalyses the reaction a 2-methoxy-6-(all-trans-polyprenyl)benzene-1,4-diol + S-adenosyl-L-methionine = a 5-methoxy-2-methyl-3-(all-trans-polyprenyl)benzene-1,4-diol + S-adenosyl-L-homocysteine + H(+). It participates in quinol/quinone metabolism; menaquinone biosynthesis; menaquinol from 1,4-dihydroxy-2-naphthoate: step 2/2. It functions in the pathway cofactor biosynthesis; ubiquinone biosynthesis. In terms of biological role, methyltransferase required for the conversion of demethylmenaquinol (DMKH2) to menaquinol (MKH2) and the conversion of 2-polyprenyl-6-methoxy-1,4-benzoquinol (DDMQH2) to 2-polyprenyl-3-methyl-6-methoxy-1,4-benzoquinol (DMQH2). The sequence is that of Ubiquinone/menaquinone biosynthesis C-methyltransferase UbiE from Blochmanniella floridana.